A 523-amino-acid chain; its full sequence is 2-isopropylmalate synthase (523 aa).

In terms of domain architecture, Pyruvate carboxyltransferase spans 5-267 (VIIFDTTLRD…HTNINHHEIW (263 aa)). Residues D14, H202, H204, and N238 each coordinate Mn(2+). Residues 392–523 (RLDYFSVQSG…QNKENNKETV (132 aa)) form a regulatory domain region.

Belongs to the alpha-IPM synthase/homocitrate synthase family. LeuA type 1 subfamily. As to quaternary structure, homodimer. Mn(2+) is required as a cofactor.

The protein resides in the cytoplasm. It carries out the reaction 3-methyl-2-oxobutanoate + acetyl-CoA + H2O = (2S)-2-isopropylmalate + CoA + H(+). The protein operates within amino-acid biosynthesis; L-leucine biosynthesis; L-leucine from 3-methyl-2-oxobutanoate: step 1/4. In terms of biological role, catalyzes the condensation of the acetyl group of acetyl-CoA with 3-methyl-2-oxobutanoate (2-ketoisovalerate) to form 3-carboxy-3-hydroxy-4-methylpentanoate (2-isopropylmalate). The chain is 2-isopropylmalate synthase from Salmonella typhi.